The following is an 896-amino-acid chain: Putative mannosylglycerate hydrolase (896 aa).

A divalent metal cation-binding residues include histidine 12, aspartate 14, aspartate 125, and histidine 348. Aspartate 125 serves as the catalytic Nucleophile.

Belongs to the glycosyl hydrolase 38 family. Requires a divalent metal cation as cofactor.

It catalyses the reaction (2R)-2-O-(6-phospho-alpha-D-mannosyl)-glycerate + H2O = alpha-D-mannose 6-phosphate + (R)-glycerate. In terms of biological role, may hydrolyze 6-phospho-mannosyl-D-glycerate to mannose-6-phosphate and glycerate. The sequence is that of Putative mannosylglycerate hydrolase (mngB) from Halalkalibacterium halodurans (strain ATCC BAA-125 / DSM 18197 / FERM 7344 / JCM 9153 / C-125) (Bacillus halodurans).